Consider the following 347-residue polypeptide: L-threonine 3-dehydrogenase (347 aa).

Cysteine 42 provides a ligand contact to Zn(2+). Residues threonine 44 and histidine 47 each act as charge relay system in the active site. Residues histidine 67, glutamate 68, cysteine 97, cysteine 100, cysteine 103, and cysteine 111 each contribute to the Zn(2+) site. NAD(+) contacts are provided by residues isoleucine 180, aspartate 200, arginine 205, 267-269 (LSL), and 292-293 (IT).

It belongs to the zinc-containing alcohol dehydrogenase family. Homotetramer. The cofactor is Zn(2+).

It localises to the cytoplasm. It catalyses the reaction L-threonine + NAD(+) = (2S)-2-amino-3-oxobutanoate + NADH + H(+). It participates in amino-acid degradation; L-threonine degradation via oxydo-reductase pathway; glycine from L-threonine: step 1/2. Catalyzes the NAD(+)-dependent oxidation of L-threonine to 2-amino-3-ketobutyrate. The protein is L-threonine 3-dehydrogenase of Bacillus velezensis (strain DSM 23117 / BGSC 10A6 / LMG 26770 / FZB42) (Bacillus amyloliquefaciens subsp. plantarum).